A 223-amino-acid polypeptide reads, in one-letter code: Glutathione S-transferase alpha I (223 aa).

M1 bears the N-acetylmethionine mark. A2 carries the N-acetylalanine; in Glutathione S-transferase alpha I, N-terminally processed modification. In terms of domain architecture, GST N-terminal spans 3–83 (RKPLLHYFNG…YVANKHNLYG (81 aa)). K4 is modified (N6-succinyllysine). Residues Y9, R45, 54–55 (QV), and 67–68 (QT) contribute to the glutathione site. In terms of domain architecture, GST C-terminal spans 85–208 (DMKERALIDM…QPGSQRKPPM (124 aa)).

The protein belongs to the GST superfamily. Alpha family. Homodimer or heterodimer of GSTA1 and GSTA2. As to expression, liver and lung.

The protein resides in the cytoplasm. It carries out the reaction RX + glutathione = an S-substituted glutathione + a halide anion + H(+). It catalyses the reaction prostaglandin A2 + glutathione = prostaglandin A2-S-(R)-glutathione. The enzyme catalyses prostaglandin J2 + glutathione = prostaglandin J2-S-(R)-glutathione. The catalysed reaction is (13S)-hydroperoxy-(9Z,11E)-octadecadienoate + 2 glutathione = (13S)-hydroxy-(9Z,11E)-octadecadienoate + glutathione disulfide + H2O. It carries out the reaction androst-5-ene-3,17-dione = androst-4-ene-3,17-dione. In terms of biological role, glutathione S-transferase that catalyzes the nucleophilic attack of the sulfur atom of glutathione on the electrophilic groups of a wide range of exogenous and endogenous compounds. Involved in the formation of glutathione conjugates of both prostaglandin A2 (PGA2) and prostaglandin J2 (PGJ2). It also catalyzes the isomerization of D5-androstene-3,17-dione (AD) into D4-androstene-3,17-dione and may therefore play an important role in hormone biosynthesis. Through its glutathione-dependent peroxidase activity toward the fatty acid hydroperoxide (13S)-hydroperoxy-(9Z,11E)-octadecadienoate/13-HPODE it is also involved in the metabolism of oxidized linoleic acid. In Oryctolagus cuniculus (Rabbit), this protein is Glutathione S-transferase alpha I.